The primary structure comprises 398 residues: Acetate kinase 1 (398 aa).

Residue Asn-10 coordinates Mg(2+). Lys-17 is a binding site for ATP. Substrate is bound at residue Arg-89. Asp-146 functions as the Proton donor/acceptor in the catalytic mechanism. ATP is bound by residues 206-210 (HLGNG), 281-283 (DCR), and 329-333 (GIGEN). Residue Glu-384 coordinates Mg(2+).

Belongs to the acetokinase family. As to quaternary structure, homodimer. Mg(2+) serves as cofactor. Mn(2+) is required as a cofactor.

The protein resides in the cytoplasm. The enzyme catalyses acetate + ATP = acetyl phosphate + ADP. It participates in metabolic intermediate biosynthesis; acetyl-CoA biosynthesis; acetyl-CoA from acetate: step 1/2. Functionally, catalyzes the formation of acetyl phosphate from acetate and ATP. Can also catalyze the reverse reaction. This is Acetate kinase 1 from Neisseria meningitidis serogroup B (strain ATCC BAA-335 / MC58).